The chain runs to 136 residues: uncharacterized protein (136 aa).

This is an uncharacterized protein from Bacillus subtilis (strain 168).